We begin with the raw amino-acid sequence, 163 residues long: Nucleotide-binding protein YajQ (163 aa).

Belongs to the YajQ family.

Nucleotide-binding protein. The polypeptide is Nucleotide-binding protein YajQ (Escherichia coli (strain K12 / DH10B)).